The sequence spans 77 residues: Ubiquitin-like protein NEDD8 (77 aa).

Positions 70-72 are interaction with uba-3; the sequence is VLA. Gly-76 participates in a covalent cross-link: Glycyl lysine isopeptide (Gly-Lys) (interchain with K-? in acceptor proteins). Phe-77 is a propeptide.

The protein belongs to the ubiquitin family. Interacts with dcn-1. Covalently attached to cullins. May interact with atx-3. Post-translationally, cleavage of precursor form is necessary for function.

It localises to the nucleus. The protein localises to the cytoplasm. Functionally, ubiquitin-like protein which plays an important role in cell cycle control and embryogenesis. Covalent attachment to its substrates requires prior activation by the E1 complex uba-3-ula-1 and linkage to the E2 enzyme ubc-12. Attachment of ned-8 to cullins activates their associated E3 ubiquitin ligase activity, and thus promotes polyubiquitination and proteasomal degradation of cyclins and other regulatory proteins. This chain is Ubiquitin-like protein NEDD8 (ned-8), found in Caenorhabditis elegans.